The primary structure comprises 645 residues: L-aspartate oxidase, chloroplastic (645 aa).

A chloroplast-targeting transit peptide spans methionine 1 to arginine 70. Residues serine 92 to alanine 95, lysine 114, asparagine 121 to glycine 128, and aspartate 292 contribute to the FAD site. Arginine 368 functions as the Proton donor/acceptor in the catalytic mechanism. Residues glutamate 453 and serine 469–leucine 470 each bind FAD.

It belongs to the FAD-dependent oxidoreductase 2 family. NadB subfamily. FAD is required as a cofactor.

Its subcellular location is the plastid. It localises to the chloroplast. It catalyses the reaction L-aspartate + O2 = iminosuccinate + H2O2. Its pathway is cofactor biosynthesis; NAD(+) biosynthesis; iminoaspartate from L-aspartate (oxidase route): step 1/1. Functionally, catalyzes the oxidation of L-aspartate to iminoaspartate. The protein is L-aspartate oxidase, chloroplastic of Oryza sativa subsp. japonica (Rice).